The chain runs to 765 residues: Periplasmic beta-glucosidase (765 aa).

The signal sequence occupies residues 1–20 (MKWLCSVGVAVSLAMQPALA). The active site involves aspartate 287.

The protein belongs to the glycosyl hydrolase 3 family.

Its subcellular location is the periplasm. The enzyme catalyses Hydrolysis of terminal, non-reducing beta-D-glucosyl residues with release of beta-D-glucose.. In Salmonella typhimurium (strain LT2 / SGSC1412 / ATCC 700720), this protein is Periplasmic beta-glucosidase (bglX).